Reading from the N-terminus, the 209-residue chain is Large ribosomal subunit protein bL25 (209 aa).

Residues 188-209 (STSMEKEGEGSQEPTAAPSSEN) are disordered. The segment covering 199–209 (QEPTAAPSSEN) has biased composition (polar residues).

This sequence belongs to the bacterial ribosomal protein bL25 family. CTC subfamily. As to quaternary structure, part of the 50S ribosomal subunit; part of the 5S rRNA/L5/L18/L25 subcomplex. Contacts the 5S rRNA. Binds to the 5S rRNA independently of L5 and L18.

Functionally, this is one of the proteins that binds to the 5S RNA in the ribosome where it forms part of the central protuberance. The protein is Large ribosomal subunit protein bL25 of Ehrlichia canis (strain Jake).